The chain runs to 348 residues: Protein RecA (348 aa).

65–72 (GPESSGKT) contributes to the ATP binding site. Positions 326–336 (LLTPAEEKPET) are enriched in basic and acidic residues. A disordered region spans residues 326 to 348 (LLTPAEEKPETDAAPEIEENEEF). Residues 338 to 348 (AAPEIEENEEF) are compositionally biased toward acidic residues.

It belongs to the RecA family.

The protein resides in the cytoplasm. Functionally, can catalyze the hydrolysis of ATP in the presence of single-stranded DNA, the ATP-dependent uptake of single-stranded DNA by duplex DNA, and the ATP-dependent hybridization of homologous single-stranded DNAs. It interacts with LexA causing its activation and leading to its autocatalytic cleavage. This Aliivibrio fischeri (strain ATCC 700601 / ES114) (Vibrio fischeri) protein is Protein RecA.